Here is a 312-residue protein sequence, read N- to C-terminus: Acetylglutamate kinase (312 aa).

Substrate is bound by residues 77-78, R99, and N192; that span reads GG.

Belongs to the acetylglutamate kinase family. ArgB subfamily.

The protein localises to the cytoplasm. It catalyses the reaction N-acetyl-L-glutamate + ATP = N-acetyl-L-glutamyl 5-phosphate + ADP. It participates in amino-acid biosynthesis; L-arginine biosynthesis; N(2)-acetyl-L-ornithine from L-glutamate: step 2/4. In terms of biological role, catalyzes the ATP-dependent phosphorylation of N-acetyl-L-glutamate. This chain is Acetylglutamate kinase, found in Synechococcus sp. (strain JA-2-3B'a(2-13)) (Cyanobacteria bacterium Yellowstone B-Prime).